Reading from the N-terminus, the 310-residue chain is Ribosomal protein L11 methyltransferase (310 aa).

4 residues coordinate S-adenosyl-L-methionine: threonine 156, glycine 179, aspartate 201, and asparagine 246.

The protein belongs to the methyltransferase superfamily. PrmA family.

Its subcellular location is the cytoplasm. The enzyme catalyses L-lysyl-[protein] + 3 S-adenosyl-L-methionine = N(6),N(6),N(6)-trimethyl-L-lysyl-[protein] + 3 S-adenosyl-L-homocysteine + 3 H(+). Methylates ribosomal protein L11. This Desulfatibacillum aliphaticivorans protein is Ribosomal protein L11 methyltransferase.